Here is a 154-residue protein sequence, read N- to C-terminus: Myoglobin (154 aa).

The 147-residue stretch at 2–148 folds into the Globin domain; that stretch reads GLSDGEWQLV…FRKDIAAKYK (147 aa). S4 carries the phosphoserine modification. A nitrite-binding site is contributed by H65. H65 lines the O2 pocket. Phosphothreonine is present on T68. H94 lines the heme b pocket.

Belongs to the globin family. In terms of assembly, monomeric.

The protein localises to the cytoplasm. The protein resides in the sarcoplasm. It carries out the reaction Fe(III)-heme b-[protein] + nitric oxide + H2O = Fe(II)-heme b-[protein] + nitrite + 2 H(+). The enzyme catalyses H2O2 + AH2 = A + 2 H2O. In terms of biological role, monomeric heme protein which primary function is to store oxygen and facilitate its diffusion within muscle tissues. Reversibly binds oxygen through a pentacoordinated heme iron and enables its timely and efficient release as needed during periods of heightened demand. Depending on the oxidative conditions of tissues and cells, and in addition to its ability to bind oxygen, it also has a nitrite reductase activity whereby it regulates the production of bioactive nitric oxide. Under stress conditions, like hypoxia and anoxia, it also protects cells against reactive oxygen species thanks to its pseudoperoxidase activity. This is Myoglobin (MB) from Globicephala melas (Long-finned pilot whale).